Here is a 131-residue protein sequence, read N- to C-terminus: Protein E11 homolog (131 aa).

Belongs to the chordopoxvirinae E11 family.

The protein resides in the virion. The protein is Protein E11 homolog of Fowlpox virus (strain NVSL) (FPV).